Reading from the N-terminus, the 370-residue chain is Actin-related protein 2/3 complex subunit 1A (370 aa).

6 WD repeats span residues 6 to 45 (FLLE…WVKA), 50 to 89 (EHNG…WKPT), 140 to 179 (PIRS…VDEK), 202 to 241 (GTGG…QVST), 244 to 284 (TEFL…TFVS), and 322 to 365 (LHQN…SSIQ).

It belongs to the WD repeat ARPC1 family. In terms of assembly, probable component of the Arp2/3 complex in which it may replace ARPC1B. In addition to its role in the cytoplasmic cytoskeleton, the Arp2/3 complex also promotes actin polymerization in the nucleus, thereby regulating gene transcription and repair of damaged DNA.

It is found in the cytoplasm. It localises to the cytoskeleton. The protein resides in the nucleus. Its function is as follows. Probably functions as a component of the Arp2/3 complex which is involved in regulation of actin polymerization and together with an activating nucleation-promoting factor (NPF) mediates the formation of branched actin networks. This Homo sapiens (Human) protein is Actin-related protein 2/3 complex subunit 1A (ARPC1A).